Consider the following 206-residue polypeptide: Putative metal transport protein HI_1621 (206 aa).

6 consecutive transmembrane segments (helical) span residues 6 to 26 (GVLHTPILLAGAVLAVAGIAV), 38 to 58 (LTALFAAAFFVAGTIHVPVGI), 72 to 92 (FLGWAVFPAFLIALLLQVIFF), 94 to 114 (FGGFAVLGVNLCVMATPAVIA), 136 to 156 (IGAGVIGVGGAGALASFVLML), and 165 to 185 (LVWLLLVSHIPVFILDSIISV).

Belongs to the CbiM family.

It localises to the cell membrane. Its function is as follows. May be involved in metal transport. This Haemophilus influenzae (strain ATCC 51907 / DSM 11121 / KW20 / Rd) protein is Putative metal transport protein HI_1621.